Consider the following 393-residue polypeptide: CAI-1 autoinducer synthase (393 aa).

K240 bears the N6-(pyridoxal phosphate)lysine mark.

Belongs to the class-II pyridoxal-phosphate-dependent aminotransferase family. Requires pyridoxal 5'-phosphate as cofactor.

Its function is as follows. Required for the synthesis of the quorum-sensing autoinducer CAI-1 ((S)-3-hydroxytridecan-4-one) which probably functions as an intragenus signal. The chain is CAI-1 autoinducer synthase (cqsA) from Vibrio campbellii (strain ATCC BAA-1116).